Consider the following 209-residue polypeptide: Mei4-dependent protein 1 (209 aa).

The first 22 residues, 1 to 22 (MLHATQLCYLLLFCFLPISISS), serve as a signal peptide directing secretion.

The protein localises to the secreted. In Schizosaccharomyces pombe (strain 972 / ATCC 24843) (Fission yeast), this protein is Mei4-dependent protein 1 (mde1).